Consider the following 182-residue polypeptide: Malignant T-cell-amplified sequence 1 homolog (182 aa).

The region spanning 93-172 is the PUA domain; the sequence is VTMQQVDKGA…IGIETYHFLN (80 aa).

The protein belongs to the MCTS1 family. In terms of assembly, interacts with DENR.

It localises to the cytoplasm. Regulates translation as part of a complex with DENR. Specifically required for translational re-initiation in mRNAs containing upstream open reading frames (uORFs). Not required for standard translational initiation. Regulates expression of a subset of gene products including mbc, InR and EcR. In Drosophila melanogaster (Fruit fly), this protein is Malignant T-cell-amplified sequence 1 homolog.